The sequence spans 60 residues: Large ribosomal subunit protein uL30 (60 aa).

Belongs to the universal ribosomal protein uL30 family. Part of the 50S ribosomal subunit.

In Agathobacter rectalis (strain ATCC 33656 / DSM 3377 / JCM 17463 / KCTC 5835 / VPI 0990) (Eubacterium rectale), this protein is Large ribosomal subunit protein uL30.